The chain runs to 626 residues: Carnitine O-acetyltransferase (626 aa).

Lysine 93 is modified (N6-succinyllysine). Lysine 261 carries the N6-acetyllysine; alternate modification. Lysine 261 is subject to N6-succinyllysine; alternate. Lysine 268 is subject to N6-acetyllysine. Residue histidine 343 is the Proton acceptor of the active site. CoA is bound by residues lysine 419 and 423–430; that span reads KSEKLSPD. Positions 452 and 454 each coordinate (R)-carnitine. Position 456 (serine 456) interacts with CoA. Residue threonine 465 participates in (R)-carnitine binding. 2 residues coordinate CoA: arginine 504 and glutamine 555. Positions 624–626 match the Microbody targeting signal motif; the sequence is AKL.

Belongs to the carnitine/choline acetyltransferase family. As to quaternary structure, monomer. Mostly in skeletal muscle, less in heart, liver and pancreas, only weakly detectable in brain, placenta, lung and kidney.

It is found in the endoplasmic reticulum. The protein localises to the peroxisome. The protein resides in the mitochondrion inner membrane. Its subcellular location is the mitochondrion. The catalysed reaction is (R)-carnitine + acetyl-CoA = O-acetyl-(R)-carnitine + CoA. It carries out the reaction propanoyl-CoA + (R)-carnitine = O-propanoyl-(R)-carnitine + CoA. The enzyme catalyses butanoyl-CoA + (R)-carnitine = O-butanoyl-(R)-carnitine + CoA. It catalyses the reaction hexanoyl-CoA + (R)-carnitine = O-hexanoyl-(R)-carnitine + CoA. The catalysed reaction is octanoyl-CoA + (R)-carnitine = O-octanoyl-(R)-carnitine + CoA. It carries out the reaction decanoyl-CoA + (R)-carnitine = O-decanoyl-(R)-carnitine + CoA. The enzyme catalyses 3-methylbutanoyl-CoA + (R)-carnitine = O-3-methylbutanoyl-(R)-carnitine + CoA. It catalyses the reaction 2-methylpropanoyl-CoA + (R)-carnitine = O-isobutanoyl-(R)-carnitine + CoA. The catalysed reaction is 2-methylbutanoyl-CoA + (R)-carnitine = O-2-methylbutanoyl-(R)-carnitine + CoA. It carries out the reaction acetoacetyl-CoA + (R)-carnitine = O-3-oxobutanoyl-(R)-carnitine + CoA. The enzyme catalyses 3-hydroxybutanoyl-CoA + (R)-carnitine = O-3-hydroxybutanoyl-(R)-carnitine + CoA. It catalyses the reaction 4,8-dimethylnonanoyl-CoA + (R)-carnitine = O-4,8-dimethylnonanoyl-(R)-carnitine + CoA. The catalysed reaction is 2,6-dimethylheptanoyl-CoA + (R)-carnitine = O-2,6-dimethylheptanoyl-(R)-carnitine + CoA. Its function is as follows. Catalyzes the reversible transfer of acyl groups from carnitine to coenzyme A (CoA) and regulates the acyl-CoA/CoA ratio. Also plays a crucial role in the transport of fatty acids for beta-oxidation. Responsible for the synthesis of short- and branched-chain acylcarnitines. Active towards some branched-chain amino acid oxidation pathway (BCAAO) intermediates. Trans-2-enoyl-CoAs and 2-methylacyl-CoAs are poor substrates. The polypeptide is Carnitine O-acetyltransferase (Homo sapiens (Human)).